A 180-amino-acid chain; its full sequence is NADH-quinone oxidoreductase subunit I (180 aa).

4Fe-4S ferredoxin-type domains are found at residues Leu-50 to Ala-80 and Glu-90 to Asp-119. [4Fe-4S] cluster contacts are provided by Cys-60, Cys-63, Cys-66, Cys-70, Cys-99, Cys-102, Cys-105, and Cys-109.

Belongs to the complex I 23 kDa subunit family. In terms of assembly, NDH-1 is composed of 13 different subunits. Subunits NuoA, H, J, K, L, M, N constitute the membrane sector of the complex. It depends on [4Fe-4S] cluster as a cofactor.

The protein localises to the cell inner membrane. The enzyme catalyses a quinone + NADH + 5 H(+)(in) = a quinol + NAD(+) + 4 H(+)(out). Functionally, NDH-1 shuttles electrons from NADH, via FMN and iron-sulfur (Fe-S) centers, to quinones in the respiratory chain. The immediate electron acceptor for the enzyme in this species is believed to be ubiquinone. Couples the redox reaction to proton translocation (for every two electrons transferred, four hydrogen ions are translocated across the cytoplasmic membrane), and thus conserves the redox energy in a proton gradient. In Yersinia enterocolitica serotype O:8 / biotype 1B (strain NCTC 13174 / 8081), this protein is NADH-quinone oxidoreductase subunit I.